The chain runs to 100 residues: RxLR effector protein Avrblb2 (100 aa).

Positions 1 to 22 are cleaved as a signal peptide; sequence MRSFLYGVLAFAVLARSSAVAA. The RxLR-dEER motif lies at 43 to 57; sequence RSLRIEAQEVIQSGR. The short motif at 78-82 is the Calmodulin-binding motif element; the sequence is RPDIK.

It belongs to the RxLR effector family. In terms of assembly, interacts with the host papain-like cysteine protease C14. Interacts with the host calmodulin.

The protein resides in the secreted. The protein localises to the host cell membrane. Its function is as follows. Secreted effector that acts as an elicitor of hypersensitive response (HR) specifically on plants carrying defense protein Rpi-blb2. Enhances P.infestans colonization of Nicotiana benthamiana leaves. Interacts with, and subsequently prevents secretion into the apoplast of the host papain-like cysteine protease C14, thus promoting virulence by interfering with the execution of host defenses. Associates with calmodulin at the host plasma membrane to interfere with plant defense-associated calcium signaling in hosts. The protein is RxLR effector protein Avrblb2 of Phytophthora infestans (strain T30-4) (Potato late blight agent).